We begin with the raw amino-acid sequence, 380 residues long: Lipid-A-disaccharide synthase (380 aa).

This sequence belongs to the LpxB family.

The catalysed reaction is a lipid X + a UDP-2-N,3-O-bis[(3R)-3-hydroxyacyl]-alpha-D-glucosamine = a lipid A disaccharide + UDP + H(+). Its pathway is bacterial outer membrane biogenesis; LPS lipid A biosynthesis. In terms of biological role, condensation of UDP-2,3-diacylglucosamine and 2,3-diacylglucosamine-1-phosphate to form lipid A disaccharide, a precursor of lipid A, a phosphorylated glycolipid that anchors the lipopolysaccharide to the outer membrane of the cell. The polypeptide is Lipid-A-disaccharide synthase (Pseudomonas savastanoi pv. phaseolicola (strain 1448A / Race 6) (Pseudomonas syringae pv. phaseolicola (strain 1448A / Race 6))).